We begin with the raw amino-acid sequence, 403 residues long: Large ribosomal subunit protein uL3 (403 aa).

Residues 1-37 form a disordered region; sequence MSHRKFSAPRHGSLGFLPRKRSSRHRGKVKSFPKDDP. Residue S13 is modified to Phosphoserine. Residues 18–31 show a composition bias toward basic residues; the sequence is PRKRSSRHRGKVKS. K39 is covalently cross-linked (Glycyl lysine isopeptide (Lys-Gly) (interchain with G-Cter in SUMO2)). K136 carries the N6-acetyllysine modification. Residues K224 and K226 each participate in a glycyl lysine isopeptide (Lys-Gly) (interchain with G-Cter in SUMO2) cross-link. H245 is subject to Tele-methylhistidine. Residues K286 and K294 each carry the N6-acetyllysine; alternate modification. K286 is covalently cross-linked (Glycyl lysine isopeptide (Lys-Gly) (interchain with G-Cter in SUMO2); alternate). K294 participates in a covalent cross-link: Glycyl lysine isopeptide (Lys-Gly) (interchain with G-Cter in SUMO1); alternate. The residue at position 304 (S304) is a Phosphoserine. Residue K366 is modified to N6-acetyllysine; alternate. K366 participates in a covalent cross-link: Glycyl lysine isopeptide (Lys-Gly) (interchain with G-Cter in SUMO2); alternate. Position 373 is an N6-acetyllysine (K373). Glycyl lysine isopeptide (Lys-Gly) (interchain with G-Cter in SUMO2) cross-links involve residues K386, K393, and K399.

Belongs to the universal ribosomal protein uL3 family. In terms of assembly, component of the large ribosomal subunit. Interacts with DHX33. In terms of processing, constitutively monomethylated at His-245 by METTL18. Methylation at His-245 regulates translation elongation by slowing ribosome traversal on tyrosine codons: slower elongation provides enough time for proper folding of synthesized proteins and prevents cellular aggregation of tyrosine-rich proteins. It is not required for incorporation of RPL3 into ribosomes.

It localises to the nucleus. It is found in the nucleolus. Its subcellular location is the cytoplasm. Its function is as follows. Component of the large ribosomal subunit. The ribosome is a large ribonucleoprotein complex responsible for the synthesis of proteins in the cell. The polypeptide is Large ribosomal subunit protein uL3 (Rpl3) (Rattus norvegicus (Rat)).